Here is a 494-residue protein sequence, read N- to C-terminus: Glycosyl hydrolase family 109 protein (494 aa).

Disordered stretches follow at residues 1 to 35 (MNDA…LRTT) and 59 to 86 (EAAQ…MAGV). Positions 1-55 (MNDAAPQNPGQDEAKGTGEKDNGGSMSPRSALRTTAGVAGAGLGLSALGTGTASA) form a signal peptide, tat-type signal. The span at 12-22 (DEAKGTGEKDN) shows a compositional bias: basic and acidic residues. NAD(+)-binding positions include 103 to 104 (NR), Asp-125, 174 to 177 (WDFH), 194 to 195 (EC), and Asn-223. Substrate contacts are provided by residues Tyr-252, Arg-271, 283-286 (YPNH), and Tyr-365. Tyr-283 serves as a coordination point for NAD(+). Residues 463 to 494 (KANGKPQQIPDFTRGEWKKSRPGTDSEKPSEP) form a disordered region. Residues 475–494 (TRGEWKKSRPGTDSEKPSEP) are compositionally biased toward basic and acidic residues.

The protein belongs to the Gfo/Idh/MocA family. Glycosyl hydrolase 109 subfamily. The cofactor is NAD(+). In terms of processing, predicted to be exported by the Tat system. The position of the signal peptide cleavage has not been experimentally proven.

In terms of biological role, glycosidase. This Streptomyces niveus (Streptomyces spheroides) protein is Glycosyl hydrolase family 109 protein.